A 134-amino-acid polypeptide reads, in one-letter code: Profilin-1 (134 aa).

The cysteines at positions 13 and 118 are disulfide-linked. The Involved in PIP2 interaction motif lies at 84 to 100; it reads AVIRGKKGSGGITTKKT. Threonine 114 carries the phosphothreonine modification.

It belongs to the profilin family. In terms of assembly, occurs in many kinds of cells as a complex with monomeric actin in a 1:1 ratio. In terms of processing, phosphorylated by MAP kinases.

The protein resides in the cytoplasm. The protein localises to the cytoskeleton. In terms of biological role, binds to actin and affects the structure of the cytoskeleton. At high concentrations, profilin prevents the polymerization of actin, whereas it enhances it at low concentrations. The sequence is that of Profilin-1 from Olea europaea (Common olive).